Consider the following 74-residue polypeptide: Putative sulfur carrier protein NMA0882 (74 aa).

Cysteine 13 acts as the Cysteine persulfide intermediate in catalysis.

It belongs to the sulfur carrier protein TusA family.

The polypeptide is Putative sulfur carrier protein NMA0882 (Neisseria meningitidis serogroup A / serotype 4A (strain DSM 15465 / Z2491)).